Reading from the N-terminus, the 387-residue chain is MNLHEYQAKDLLESYGLKVQKGIVAHNPNEAAQAFDQLGGKFAVVKAQVHAGGRGKAGGVKVVKSSQEAREVAESLIGKNLVTFQTDAEGQPVNSVGIFEDVYPVTRELYLGAVVDRSSRKVTFMASTEGGVDIEEVAHNSPEKILKVEVDPLVGLQPFQAREVAFKLGLEGKQINDFVKTMLGAYKAFIECDFALFEINPLAVRENGEIVCVDGKINLDSNALYRHPKLLALRDKSQENAKELKASEHELNYVALEGNIGCMVNGAGLAMATMDIIQLYGGKPANFLDVGGGATKERVIEAFKLILDDENVKAVLINIFGGIVRCDMIAEAIIEAVKEVNVTVPVVVRLEGNNAEKGAKILADSGLKLIPADGLADAADKVVKSLG.

The 237-residue stretch at 9-245 folds into the ATP-grasp domain; it reads KDLLESYGLK…KSQENAKELK (237 aa). ATP-binding positions include Lys-46, 53 to 55, Glu-100, Tyr-103, and Glu-108; that span reads GRG. 2 residues coordinate Mg(2+): Asn-200 and Asp-214. Substrate is bound by residues Asn-265 and 322–324; that span reads GIV.

It belongs to the succinate/malate CoA ligase beta subunit family. Heterotetramer of two alpha and two beta subunits. Mg(2+) serves as cofactor.

The enzyme catalyses succinate + ATP + CoA = succinyl-CoA + ADP + phosphate. It carries out the reaction GTP + succinate + CoA = succinyl-CoA + GDP + phosphate. It participates in carbohydrate metabolism; tricarboxylic acid cycle; succinate from succinyl-CoA (ligase route): step 1/1. Its function is as follows. Succinyl-CoA synthetase functions in the citric acid cycle (TCA), coupling the hydrolysis of succinyl-CoA to the synthesis of either ATP or GTP and thus represents the only step of substrate-level phosphorylation in the TCA. The beta subunit provides nucleotide specificity of the enzyme and binds the substrate succinate, while the binding sites for coenzyme A and phosphate are found in the alpha subunit. The chain is Succinate--CoA ligase [ADP-forming] subunit beta from Francisella tularensis subsp. holarctica (strain FTNF002-00 / FTA).